The primary structure comprises 510 residues: MGLLSDVINNFLPETPLAWAALILASFTLYSVQLVVRRLYFHPLSKIPGPFLARSRYWYEFYQDIILGGIYVKNYAALHEKYGPVLRASPDRVHVSDPDFFHEVYSSGSKYMKDPAFFQAAGGIPEALPAIVDVEYHRRRRKLINDLFSAKSMEALSHLVLKVVQNALSKAHEHHEANKVLDIQRLYTGITIDTIMQVLCDRTLNFIDAKEEEEPPFLATLRTFSENFFLLKHFPILIWMALNIPKSIAQKLIPGEFEFRASINQWIRDRASEHELGVEKAEDGRKTVIDLLLRPEDGGRPLTHQAVEDETYSFAFAGTHTTSHTMSMGTYYLLSHPAKLQKLRDELKPIPKNDQGLYEYKTVRSLPYLNACIKESLRMSSPVPGILPRLVPAEGMTWRGHYLPPGTSVSSSIYSVHTDPNIFPNPEQFIPERWLANENLDHYLVVFGKGSRACIGLNVAWMETYLTFSNFFTSLNMTLFETNEQSTDWTDCGNAMIKKHVRVKVDSLAS.

Residues Pro-16–Val-36 traverse the membrane as a helical segment. Cys-454 lines the heme pocket. Asn-476 carries N-linked (GlcNAc...) asparagine glycosylation.

The protein belongs to the cytochrome P450 family. Heme serves as cofactor.

It localises to the membrane. Its pathway is secondary metabolite biosynthesis. Functionally, cytochrome P450 monooxygenase; part of the gene cluster that mediates the biosynthesis of botrydial. Botrydial is necessary for colonization of plant tissue by the T4 strain. It is a strain-dependent virulence factor since highly aggressive strains like SAS56 or B05 still retain substantial virulence when botrydial synthesis is impaired, since they produce also botcinic acid. The first step of botrydial biosynthesis is performed by the sesquiterpene synthase BOT2 which catalyzes the cyclization of farnesyl diphosphate (FPP) to presilphiperfolan-8-beta-ol (PSP). The cytochrome P450 monooxygenase BOT4 then catalyzes the hydroxylation at C-4 to give a probotryane intermediate. Acetylation of the hydroxyl at C-4 is carried out by the acetyltransferase BOT5, followed by the combined action of the P450 monooxygenases BOT3 and BOT1, to yield finally the glycol, via the regio- and stereospecific hydroxylations at C-10 and C-15 of the probotryane intermediates, respectively. The cleavage of the C10-C15 bond of probotryane skeleton is an intriguing and chemically important reaction, which could be mediated by some of the monooxygenases or by a combination of them. It is possible that either BOT3 or BOT1 would oxidize either the 10- or the 15-hydroxy group to the hydroperoxide derivative, which would then undergo heterolytic fragmentation to give the dialdehyde botrydial. Finally, the dehydrogenase BOT7 might be involved in the conversion of botrydial to dihydrobotrydial. The polypeptide is Cytochrome P450 monooxygenase BOT1 (Botryotinia fuckeliana (Noble rot fungus)).